A 157-amino-acid chain; its full sequence is NADPH-dependent 7-cyano-7-deazaguanine reductase (157 aa).

The active-site Thioimide intermediate is the Cys-55. Asp-62 acts as the Proton donor in catalysis. Substrate-binding positions include 77–79 (VES) and 96–97 (HE).

Belongs to the GTP cyclohydrolase I family. QueF type 1 subfamily.

It is found in the cytoplasm. The enzyme catalyses 7-aminomethyl-7-carbaguanine + 2 NADP(+) = 7-cyano-7-deazaguanine + 2 NADPH + 3 H(+). It functions in the pathway tRNA modification; tRNA-queuosine biosynthesis. Functionally, catalyzes the NADPH-dependent reduction of 7-cyano-7-deazaguanine (preQ0) to 7-aminomethyl-7-deazaguanine (preQ1). This chain is NADPH-dependent 7-cyano-7-deazaguanine reductase, found in Neisseria meningitidis serogroup B (strain ATCC BAA-335 / MC58).